A 725-amino-acid polypeptide reads, in one-letter code: Dipeptidyl-peptidase 5 (725 aa).

A signal peptide spans 1 to 18; the sequence is MGALRWLSIAATASTALA. 6 N-linked (GlcNAc...) asparagine glycosylation sites follow: Asn-75, Asn-96, Asn-153, Asn-258, Asn-383, and Asn-453. Catalysis depends on Ser-563, which acts as the Charge relay system. A glycan (N-linked (GlcNAc...) asparagine) is linked at Asn-610. Catalysis depends on charge relay system residues Asp-646 and His-678.

The protein belongs to the peptidase S9C family.

The protein resides in the secreted. In Aspergillus oryzae (strain ATCC 42149 / RIB 40) (Yellow koji mold), this protein is Dipeptidyl-peptidase 5.